Reading from the N-terminus, the 259-residue chain is Small ribosomal subunit protein uS2 (259 aa).

The protein belongs to the universal ribosomal protein uS2 family.

This chain is Small ribosomal subunit protein uS2, found in Fervidobacterium nodosum (strain ATCC 35602 / DSM 5306 / Rt17-B1).